The primary structure comprises 520 residues: Succinyl-CoA:3-ketoacid coenzyme A transferase 2B, mitochondrial (520 aa).

The transit peptide at 1–39 directs the protein to the mitochondrion; sequence MAALRLLAWALPRGVSALRPRPALPHRLIRRYVSDRSGS. The segment at 280 to 299 is disordered; the sequence is ERLTTRDSKPAPGSKDNDPS. Glu342 serves as the catalytic 5-glutamyl coenzyme A thioester intermediate.

The protein belongs to the 3-oxoacid CoA-transferase family. Homodimer. As to expression, testis specific. Expressed in late spermatids. Accumulates during spermiogenesis. Also detected in the midpiece of spermatozoa.

The protein localises to the mitochondrion. The catalysed reaction is a 3-oxo acid + succinyl-CoA = a 3-oxoacyl-CoA + succinate. The protein operates within ketone metabolism; succinyl-CoA degradation; acetoacetyl-CoA from succinyl-CoA: step 1/1. Key enzyme for ketone body catabolism. Transfers the CoA moiety from succinate to acetoacetate. Formation of the enzyme-CoA intermediate proceeds via an unstable anhydride species formed between the carboxylate groups of the enzyme and substrate. Probably play and important roles in the energy metabolism of spermatozoa. This chain is Succinyl-CoA:3-ketoacid coenzyme A transferase 2B, mitochondrial (Oxct2b), found in Mus musculus (Mouse).